We begin with the raw amino-acid sequence, 861 residues long: ToMV resistance protein Tm-2(2) (861 aa).

Residues 63-83 (VKNLLKDIQELAGDVEDLLDD) adopt a coiled-coil conformation. An NB-ARC domain is found at 162–388 (DDFNMLQAKL…LESMGHKVQD (227 aa)). An ATP-binding site is contributed by 185-192 (GMPGLGKT). 13 LRR repeats span residues 225–248 (LDIAKQIGLTEQKMKENLEDNLRS), 305–327 (LHALQPLESEKSFELFTKKIFNF), 388–411 (DGCAKVLALSYNDLPIASRPCFLY), 449–472 (LAEDVLNDLVSRNLIQLAKRTYNG), 510–536 (VARLRRITFYSDNVMIEFFRSNPKLEK), 585–608 (MTCLRYLRLEGNICGKLPNSIVKL), 609–631 (TRLETIDIDRRSLIQPPSGVWES), 652–680 (ISSFYPNIYSLHPNNLQTLMWIPDKFFEP), 689–710 (LRKLGILGVSNSTVKMLSIFSP), 712–735 (LKALEVLKLSFSSDPSEQIKLSSY), 736–758 (PHIAKLHLNVNRTMALNSQSFPP), 784–810 (LRKLKMFICKYNEEKMDLSGEANGYSF), and 811–835 (PQLEVLHIHSPNGLSEVTCTDDVSM).

Belongs to the disease resistance NB-LRR family. In terms of assembly, (Microbial infection) Interacts with tobamoviruses mouvement protein (e.g. tobacco mosaic virus (TMV) MP, AC P03583) at the plasma membrane; this interaction triggers defense responses leading to programmed cell death. Binds to HSP90 proteins (e.g. HSP90-1 and Nicotiana benthamiana HSP90-1); this interaction seems required for defense responses toward tobamoviruses.

The protein resides in the cell membrane. In terms of biological role, inhibitor of viral mouvements which confers resistance to some tobamoviruses including tomato mosaic virus (ToMV) (e.g. strains L, B7 and ToMV1-2) and tobacco mosaic virus (TMV), but not to resistance-breaking isolates (e.g. LIIA and ToMV2(2)) ToMV and tomato brown rugose fruit virus (ToBRFV). Elicits a hypersensitive reaction in response to avirulent (Avr) movement proteins from resistance inducing tobamoviruses (e.g. ToMV and TMV) strains, thus leading to programmed cell death; this local extreme resistance requires rbcS. In Solanum lycopersicum (Tomato), this protein is ToMV resistance protein Tm-2(2).